The chain runs to 98 residues: NADH-ubiquinone oxidoreductase chain 4L (98 aa).

A run of 3 helical transmembrane segments spans residues 1–21, 29–49, and 61–81; these read MTMV…GLLM, SLLC…VTIL, and IILL…LVMV.

It belongs to the complex I subunit 4L family. In terms of assembly, core subunit of respiratory chain NADH dehydrogenase (Complex I) which is composed of 45 different subunits.

Its subcellular location is the mitochondrion inner membrane. The catalysed reaction is a ubiquinone + NADH + 5 H(+)(in) = a ubiquinol + NAD(+) + 4 H(+)(out). Functionally, core subunit of the mitochondrial membrane respiratory chain NADH dehydrogenase (Complex I) which catalyzes electron transfer from NADH through the respiratory chain, using ubiquinone as an electron acceptor. Part of the enzyme membrane arm which is embedded in the lipid bilayer and involved in proton translocation. The protein is NADH-ubiquinone oxidoreductase chain 4L (MT-ND4L) of Mirounga angustirostris (Northern elephant seal).